We begin with the raw amino-acid sequence, 109 residues long: Staphostatin B (109 aa).

The interval 97–101 (IGTSR) is binds to staphopain B.

Belongs to the protease inhibitor I57 (SspC) family. As to quaternary structure, forms a stable non-covalent complex with prematurely activated/folded SspB.

It is found in the cytoplasm. In terms of biological role, specifically inhibits the cysteine protease staphopain B (SspB) by blocking the active site of the enzyme. Probably required to protect cytoplasmic proteins from being degraded by prematurely activated/folded prostaphopain B. Also involved in growth capacity, viability and bacterial morphology. This chain is Staphostatin B (sspC), found in Staphylococcus aureus (strain Mu50 / ATCC 700699).